Consider the following 493-residue polypeptide: MVPVIALVGRPNVGKSTLFNRLTKSRDAIVAEYAGLTRDRQYGEARWQGRTYIVIDTGGISGDEEGIDAKMAEQSLQAIEEADAVLFLVDSRAGMTAADQMIAEHLRKRNKRSFLIANKVDTIDPDLARAEFSPLGLGDALPIAAAHGRGINHMLQEALGIFPKDNVEEEGEGEPASEEVAEGEEPTRIPGPSEKDGIKIAIIGRPNVGKSTLVNRMLGEERVIVYDQAGTTRDSIYIPFERNEEKYTLIDTAGVRRRGKIFEAVEKFSVVKTLQAIQDANVVIFVMDAREGVVEHDLNLLGFVLETGRALVIALNKWDGMEAAERDYVKTELERRLLFVDFADIHFISALHGTGVGHLYKSVQESFRSAVTRWPTSRLTSILEDAVQVHQPPMVNGRRIKLRYAHLGGANPPLIVIHGNQVDAVPKAYTRYLEKTYRRVLKLVGTPIRIEYKGGENPYEGKKNSLTARQVNKKRRLMSHHKKAEKKKKDKRR.

Residues 3 to 166 form the EngA-type G 1 domain; that stretch reads PVIALVGRPN…EALGIFPKDN (164 aa). GTP contacts are provided by residues 9–16, 56–60, and 118–121; these read GRPNVGKS, DTGGI, and NKVD. Positions 167–184 are enriched in acidic residues; it reads VEEEGEGEPASEEVAEGE. A disordered region spans residues 167–195; it reads VEEEGEGEPASEEVAEGEEPTRIPGPSEK. The 174-residue stretch at 198–371 folds into the EngA-type G 2 domain; that stretch reads IKIAIIGRPN…SVQESFRSAV (174 aa). GTP contacts are provided by residues 204-211, 251-255, and 316-319; these read GRPNVGKS, DTAGV, and NKWD. One can recognise a KH-like domain in the interval 372–456; it reads TRWPTSRLTS…PIRIEYKGGE (85 aa). Positions 454 to 463 are enriched in basic and acidic residues; it reads GGENPYEGKK. A disordered region spans residues 454–493; that stretch reads GGENPYEGKKNSLTARQVNKKRRLMSHHKKAEKKKKDKRR. Basic residues predominate over residues 471-493; it reads VNKKRRLMSHHKKAEKKKKDKRR.

It belongs to the TRAFAC class TrmE-Era-EngA-EngB-Septin-like GTPase superfamily. EngA (Der) GTPase family. As to quaternary structure, associates with the 50S ribosomal subunit.

GTPase that plays an essential role in the late steps of ribosome biogenesis. The protein is GTPase Der of Pseudomonas aeruginosa (strain LESB58).